The chain runs to 735 residues: Glutamine-dependent NAD(+) synthetase (735 aa).

The CN hydrolase domain occupies 4–274 (LRVATCNLNQ…VEVLDALVDL (271 aa)). The active-site Proton acceptor; for glutaminase activity is glutamate 44. Residue lysine 113 is the For glutaminase activity of the active site. Cysteine 174 functions as the Nucleophile; for glutaminase activity in the catalytic mechanism. The interval 324–711 (YHRPEEEIAF…STEGELRRRK (388 aa)) is ligase. Residue 354–361 (PLSGGADS) participates in ATP binding. Serine 356 is a catalytic residue.

It in the C-terminal section; belongs to the NAD synthetase family.

The catalysed reaction is deamido-NAD(+) + L-glutamine + ATP + H2O = L-glutamate + AMP + diphosphate + NAD(+) + H(+). Its pathway is cofactor biosynthesis; NAD(+) biosynthesis; NAD(+) from deamido-NAD(+) (L-Gln route): step 1/1. The polypeptide is Glutamine-dependent NAD(+) synthetase (Oryza sativa subsp. indica (Rice)).